We begin with the raw amino-acid sequence, 383 residues long: Probable cell wall hydrolase LytN (383 aa).

Residues Met1–Ala49 form the signal peptide. In terms of domain architecture, LysM spans Gln175–Val219. The 138-residue stretch at Asn241 to Arg378 folds into the Peptidase C51 domain.

The protein resides in the secreted. Probably involved in peptidoglycan hydrolysis. This is Probable cell wall hydrolase LytN (lytN) from Staphylococcus aureus (strain NCTC 8325 / PS 47).